Here is a 102-residue protein sequence, read N- to C-terminus: Small ribosomal subunit protein uS10 (102 aa).

Belongs to the universal ribosomal protein uS10 family. In terms of assembly, part of the 30S ribosomal subunit.

Its function is as follows. Involved in the binding of tRNA to the ribosomes. This Thermosipho melanesiensis (strain DSM 12029 / CIP 104789 / BI429) protein is Small ribosomal subunit protein uS10.